The chain runs to 607 residues: CUB and zona pellucida-like domain-containing protein 1 (607 aa).

Residues 1–24 (MELVRRLMPLTLLILSCLAELTMA) form the signal peptide. The cysteines at positions 17 and 58 are disulfide-linked. CUB domains are found at residues 25–146 (EAEG…YFFS) and 154–265 (CGGY…YTSI). Topologically, residues 25–568 (EAEGNASCTV…EETPNQPFNS (544 aa)) are lumenal. 3 N-linked (GlcNAc...) asparagine glycosylation sites follow: Asn-29, Asn-57, and Asn-67. Disulfide bonds link Cys-85–Cys-107, Cys-154–Cys-180, and Cys-207–Cys-229. The ZP domain maps to 276-519 (TCSSDRMRVI…SRCNQGCVSR (244 aa)). Residues Asn-394 and Asn-419 are each glycosylated (N-linked (GlcNAc...) asparagine). Cys-442 and Cys-498 are joined by a disulfide. Residues 569–589 (VHLFSFMVLALNVVTVATITV) form a helical membrane-spanning segment. The Cytoplasmic segment spans residues 590 to 607 (RHFVNQRADYKYQKLQNY).

Detected in pancreas and epithelium of ovary. Expressed at higher levels in ovarian tumors than in normal tissue.

The protein resides in the zymogen granule membrane. Functionally, localized to zymogen granules, where it functions in trypsinogen activation. May indirectly regulate cell motility, cell-cell and cell/extracellular matrix interactions. The chain is CUB and zona pellucida-like domain-containing protein 1 from Homo sapiens (Human).